The following is a 402-amino-acid chain: MKAGIFLVGTELLNGATIDTNSIYIAEELNKYGIEIEFKMTVRDVMSEITKALTYAKKNVDLVILTGGLGPTDDDITKEAMAKFLKKKLVVDEKEKKELLKKYKAYKNPNKTNFKEVEKPEGAVSFKNDVGMAPAVYIDGMVAFPGFPNELKNMFPKFLKYYVKENNLKSQIYIKDIITYGIGESVLETTVKDLFTEGDIFYEFLVKDYGTLIRLQTKIENKKNVAKIVKKLYNRISEFIIGEDDDRIENTIYECLNLGEKPLTISTAESCTGGMVASKLIEVPGISENFIESIVSYSNEAKIKRLKVKKETLEKYGAVSEEVAREMLAGLKTDIGISTTGIAGPGGGTKDKPVGLVYIGIKVKNEVKVFKRELKGDRNKIRQRAMMHALYNLLKILSKKVR.

This sequence belongs to the CinA family.

The polypeptide is CinA-like protein (Fusobacterium nucleatum subsp. nucleatum (strain ATCC 25586 / DSM 15643 / BCRC 10681 / CIP 101130 / JCM 8532 / KCTC 2640 / LMG 13131 / VPI 4355)).